A 269-amino-acid polypeptide reads, in one-letter code: MERREFCASLLAGGTAGMCVDLILFPLDTIKTRLQSPLGFSKSGGFRGIYAGVPSTAVGSFPNAAAFFVTYESAKQLLRSDSSYLSPIIHMAAASLGEVVACLIRVPSEVIKQRAQVSPSSTTYQMLSATLRQEGIKGLYRGYKSTVLREIPFSLVQFPLWESLKDLWSWKQGRAVDSWQSAVCGAFAGGFAAALTTPLDVAKTRIMLAKAGSGVASGNVLFALHEIWRTQGIMGLFAGVIPRMTAISLGGFIFLGAYDKVRTLMLREQ.

3 Solcar repeats span residues Arg4 to Leu77, Leu85 to Leu167, and Val176 to Leu264. The next 6 helical transmembrane spans lie at Glu5–Phe25, Ile49–Val69, Tyr84–Ile104, Arg141–Trp161, Ser181–Val201, and Phe237–Ala257.

This sequence belongs to the mitochondrial carrier (TC 2.A.29) family.

The protein resides in the mitochondrion inner membrane. The enzyme catalyses S-adenosyl-L-homocysteine(out) + S-adenosyl-L-methionine(in) = S-adenosyl-L-homocysteine(in) + S-adenosyl-L-methionine(out). Mitochondrial S-adenosyl-L-methionine/S-adenosyl-L-homocysteine antiporter. Mediates the exchange of cytosolic S-adenosyl-L-methionine, the predominant methyl-group donor for macromolecule methylation processes, for mitochondrial S-adenosylhomocysteine(SAH), a by-product of methylation reactions. The sequence is that of Mitochondrial S-adenosylmethionine carrier protein (slc25a26) from Xenopus tropicalis (Western clawed frog).